We begin with the raw amino-acid sequence, 269 residues long: Shikimate dehydrogenase (NADP(+)) (269 aa).

Residues 22-24 and Thr-68 contribute to the shikimate site; that span reads TLS. The active-site Proton acceptor is Lys-72. Shikimate-binding residues include Asn-93 and Asp-104. Residues 128–132, 152–157, and Phe-210 contribute to the NADP(+) site; these read GAGGA and NRTNLR. Tyr-212 is a shikimate binding site. An NADP(+)-binding site is contributed by Gly-233.

It belongs to the shikimate dehydrogenase family. In terms of assembly, homodimer.

The enzyme catalyses shikimate + NADP(+) = 3-dehydroshikimate + NADPH + H(+). It participates in metabolic intermediate biosynthesis; chorismate biosynthesis; chorismate from D-erythrose 4-phosphate and phosphoenolpyruvate: step 4/7. In terms of biological role, involved in the biosynthesis of the chorismate, which leads to the biosynthesis of aromatic amino acids. Catalyzes the reversible NADPH linked reduction of 3-dehydroshikimate (DHSA) to yield shikimate (SA). The sequence is that of Shikimate dehydrogenase (NADP(+)) from Saccharolobus islandicus (strain L.S.2.15 / Lassen #1) (Sulfolobus islandicus).